The chain runs to 715 residues: Fatty acid oxidation complex subunit alpha (715 aa).

Residues methionine 1–alanine 189 form an enoyl-CoA hydratase/isomerase region. Residue aspartate 296 coordinates substrate. Residues alanine 311–tyrosine 715 form a 3-hydroxyacyl-CoA dehydrogenase region. Residues methionine 325, aspartate 344, valine 401 to glutamate 403, lysine 408, and serine 430 contribute to the NAD(+) site. Histidine 451 acts as the For 3-hydroxyacyl-CoA dehydrogenase activity in catalysis. Asparagine 454 serves as a coordination point for NAD(+). Substrate contacts are provided by asparagine 501 and tyrosine 661.

In the N-terminal section; belongs to the enoyl-CoA hydratase/isomerase family. This sequence in the C-terminal section; belongs to the 3-hydroxyacyl-CoA dehydrogenase family. As to quaternary structure, heterotetramer of two alpha chains (FadB) and two beta chains (FadA).

It catalyses the reaction a (3S)-3-hydroxyacyl-CoA + NAD(+) = a 3-oxoacyl-CoA + NADH + H(+). It carries out the reaction a (3S)-3-hydroxyacyl-CoA = a (2E)-enoyl-CoA + H2O. The catalysed reaction is a 4-saturated-(3S)-3-hydroxyacyl-CoA = a (3E)-enoyl-CoA + H2O. The enzyme catalyses (3S)-3-hydroxybutanoyl-CoA = (3R)-3-hydroxybutanoyl-CoA. It catalyses the reaction a (3Z)-enoyl-CoA = a 4-saturated (2E)-enoyl-CoA. It carries out the reaction a (3E)-enoyl-CoA = a 4-saturated (2E)-enoyl-CoA. The protein operates within lipid metabolism; fatty acid beta-oxidation. In terms of biological role, involved in the aerobic and anaerobic degradation of long-chain fatty acids via beta-oxidation cycle. Catalyzes the formation of 3-oxoacyl-CoA from enoyl-CoA via L-3-hydroxyacyl-CoA. It can also use D-3-hydroxyacyl-CoA and cis-3-enoyl-CoA as substrate. This chain is Fatty acid oxidation complex subunit alpha, found in Aeromonas salmonicida (strain A449).